Consider the following 398-residue polypeptide: S-adenosylmethionine synthase (398 aa).

Position 16 (His-16) interacts with ATP. Asp-18 is a Mg(2+) binding site. Glu-44 contacts K(+). L-methionine-binding residues include Glu-57 and Gln-100. A flexible loop region spans residues 100–110; it reads QSPDIAQGVNE. ATP contacts are provided by residues 175-177, 242-243, Asp-251, 257-258, Ala-274, and Lys-278; these read DAK, RF, and RK. Residue Asp-251 participates in L-methionine binding. Lys-282 is an L-methionine binding site.

Belongs to the AdoMet synthase family. In terms of assembly, homotetramer; dimer of dimers. Mg(2+) serves as cofactor. The cofactor is K(+).

It is found in the cytoplasm. It catalyses the reaction L-methionine + ATP + H2O = S-adenosyl-L-methionine + phosphate + diphosphate. It participates in amino-acid biosynthesis; S-adenosyl-L-methionine biosynthesis; S-adenosyl-L-methionine from L-methionine: step 1/1. Catalyzes the formation of S-adenosylmethionine (AdoMet) from methionine and ATP. The overall synthetic reaction is composed of two sequential steps, AdoMet formation and the subsequent tripolyphosphate hydrolysis which occurs prior to release of AdoMet from the enzyme. This is S-adenosylmethionine synthase from Streptococcus agalactiae serotype III (strain NEM316).